The following is a 66-amino-acid chain: Beta-mammal toxin Cv2 (66 aa).

Residues Lys1–Asn66 form the LCN-type CS-alpha/beta domain. 4 disulfides stabilise this stretch: Cys12/Cys65, Cys16/Cys41, Cys25/Cys46, and Cys29/Cys48.

As to expression, expressed by the venom gland.

It localises to the secreted. Its activity is regulated as follows. Is susceptible to be slightly neutralized by human antibodies scFvs 10FG2. In terms of biological role, beta toxins bind voltage-independently at site-4 of sodium channels (Nav) and reduces peak current and shifts the voltage of activation toward more negative potentials thereby affecting sodium channel activation and promoting spontaneous and repetitive firing. This toxin is slightly toxic to mice. The sequence is that of Beta-mammal toxin Cv2 from Centruroides villegasi (Scorpion).